We begin with the raw amino-acid sequence, 932 residues long: MYCBP-associated protein (932 aa).

Disordered stretches follow at residues 1–39 and 165–187; these read MMKK…PVSN and EEPK…PPQH. The span at 165 to 178 shows a compositional bias: basic and acidic residues; that stretch reads EEPKPKPPKEEERP. S559 carries the phosphoserine modification. The residue at position 560 (T560) is a Phosphothreonine. S566 carries the phosphoserine modification. Positions 789 to 886 are disordered; it reads LPDEQGQKSP…TAPSQEPIDP (98 aa). The span at 795 to 806 shows a compositional bias: polar residues; sequence QKSPPVTESKVT. Over residues 810-869 the composition is skewed to basic and acidic residues; the sequence is AGKEDRRGGAQEKKQLGTKDKDDKRGSKTPGKEDRPNSKKLKPKDDKKVVKSASRDRLLS.

In terms of assembly, interacts with MYCBP.

The protein localises to the cytoplasm. It is found in the membrane. Functionally, may play a role in spermatogenesis. May be involved in synaptic processes. This is MYCBP-associated protein from Mus musculus (Mouse).